The chain runs to 307 residues: N-acetylmuramic acid 6-phosphate etherase (307 aa).

The SIS domain occupies 57–220; sequence IIEAFKTNGR…TTASMIGVGK (164 aa). The active-site Proton donor is E85. Residue E116 is part of the active site.

Belongs to the GCKR-like family. MurNAc-6-P etherase subfamily. Homodimer.

The enzyme catalyses N-acetyl-D-muramate 6-phosphate + H2O = N-acetyl-D-glucosamine 6-phosphate + (R)-lactate. Its pathway is amino-sugar metabolism; N-acetylmuramate degradation. Its function is as follows. Specifically catalyzes the cleavage of the D-lactyl ether substituent of MurNAc 6-phosphate, producing GlcNAc 6-phosphate and D-lactate. The chain is N-acetylmuramic acid 6-phosphate etherase from Alkaliphilus metalliredigens (strain QYMF).